The sequence spans 428 residues: Cyclin-B1-1 (428 aa).

This sequence belongs to the cyclin family. Cyclin AB subfamily. Interacts with FZR2/CCS52A1, FZR1/CCS52A2 and FZR3/CCS52B. Expressed in root tip, lateral root apex, shoot apex, leaf primordia, axillary buds, stamen and petal primordia, ovules and developing embryo.

The protein resides in the nucleus. This is Cyclin-B1-1 (CYCB1-1) from Arabidopsis thaliana (Mouse-ear cress).